The sequence spans 151 residues: Large ribosomal subunit protein uL13 (151 aa).

Belongs to the universal ribosomal protein uL13 family. Part of the 50S ribosomal subunit.

Its function is as follows. This protein is one of the early assembly proteins of the 50S ribosomal subunit, although it is not seen to bind rRNA by itself. It is important during the early stages of 50S assembly. This is Large ribosomal subunit protein uL13 from Synechocystis sp. (strain ATCC 27184 / PCC 6803 / Kazusa).